The primary structure comprises 263 residues: Sulfur carrier protein FdhD (263 aa).

Cysteine 107 (cysteine persulfide intermediate) is an active-site residue.

Belongs to the FdhD family.

It is found in the cytoplasm. Required for formate dehydrogenase (FDH) activity. Acts as a sulfur carrier protein that transfers sulfur from IscS to the molybdenum cofactor prior to its insertion into FDH. The sequence is that of Sulfur carrier protein FdhD from Geobacillus kaustophilus (strain HTA426).